A 225-amino-acid chain; its full sequence is UPF0758 protein Sez_1052 (225 aa).

An MPN domain is found at 102-224; it reads PVLSSAQVAE…YYSFREKSDL (123 aa). The Zn(2+) site is built by His-173, His-175, and Asp-186. Residues 173-186 carry the JAMM motif motif; sequence HNHPSGLTKPSAND.

This sequence belongs to the UPF0758 family.

This chain is UPF0758 protein Sez_1052, found in Streptococcus equi subsp. zooepidemicus (strain MGCS10565).